The sequence spans 119 residues: Protein TusC (119 aa).

Belongs to the DsrF/TusC family. As to quaternary structure, heterohexamer, formed by a dimer of trimers. The hexameric TusBCD complex contains 2 copies each of TusB, TusC and TusD. The TusBCD complex interacts with TusE.

Its subcellular location is the cytoplasm. Its function is as follows. Part of a sulfur-relay system required for 2-thiolation of 5-methylaminomethyl-2-thiouridine (mnm(5)s(2)U) at tRNA wobble positions. The protein is Protein TusC of Pectobacterium carotovorum subsp. carotovorum (strain PC1).